Reading from the N-terminus, the 277-residue chain is Phosphatidylglycerol--prolipoprotein diacylglyceryl transferase (277 aa).

Helical transmembrane passes span 18–38, 51–71, 89–109, and 116–136; these read ISVKWYGVIIASAVVIALLLA, IIVDLLIWAIPISIISARIYY, IWHGGIAIYGALIGAVLTAII, and ISFWQLADVVAPSLIIAQAIG. Arginine 137 lines the a 1,2-diacyl-sn-glycero-3-phospho-(1'-sn-glycerol) pocket. 3 helical membrane passes run 177–197, 205–225, and 235–255; these read QPTFLYESLWNVLGFIILLII, GELFLGYVIWYSFGRFFIEGM, and FRVSQVLSLLLIVLSIGIIIY.

The protein belongs to the Lgt family.

The protein resides in the cell membrane. It catalyses the reaction L-cysteinyl-[prolipoprotein] + a 1,2-diacyl-sn-glycero-3-phospho-(1'-sn-glycerol) = an S-1,2-diacyl-sn-glyceryl-L-cysteinyl-[prolipoprotein] + sn-glycerol 1-phosphate + H(+). It participates in protein modification; lipoprotein biosynthesis (diacylglyceryl transfer). In terms of biological role, catalyzes the transfer of the diacylglyceryl group from phosphatidylglycerol to the sulfhydryl group of the N-terminal cysteine of a prolipoprotein, the first step in the formation of mature lipoproteins. The chain is Phosphatidylglycerol--prolipoprotein diacylglyceryl transferase from Listeria monocytogenes serotype 4a (strain HCC23).